The chain runs to 286 residues: 2,3,4,5-tetrahydropyridine-2,6-dicarboxylate N-succinyltransferase (286 aa).

Substrate-binding residues include Arg111 and Asp148.

The protein belongs to the transferase hexapeptide repeat family. Homotrimer.

The protein localises to the cytoplasm. It carries out the reaction (S)-2,3,4,5-tetrahydrodipicolinate + succinyl-CoA + H2O = (S)-2-succinylamino-6-oxoheptanedioate + CoA. It participates in amino-acid biosynthesis; L-lysine biosynthesis via DAP pathway; LL-2,6-diaminopimelate from (S)-tetrahydrodipicolinate (succinylase route): step 1/3. The chain is 2,3,4,5-tetrahydropyridine-2,6-dicarboxylate N-succinyltransferase from Rhizobium etli (strain ATCC 51251 / DSM 11541 / JCM 21823 / NBRC 15573 / CFN 42).